A 473-amino-acid polypeptide reads, in one-letter code: MKTLYSLRRFYPVETLFNGTLALAGRDQETTGFAWWAGNARLINLSGKLLGAHVAHAGLIVFWAGAMNLFEVAHFVPEKPMYEQGLILLPHLATLGWGVGPGGEVIDTFPYFVSGVLHLISSAVLGFGGIYHALLGPETLEESFPFFGYVWKDRNKMTTILGIHLILLGVGAFLLVFKALYFGGVYDTWAPGGGDVRKITNLTLSPSVIFGYLLKSPFGGEGWIVSVDDLEDIIGGHVWLGFICILGGIWHILTKPFAWARRAFVWSGEAYLSYSLGALSIFGFIACCFVWFNNTAYPSEFYGPTGPEASQAQAFTFLVRDQRLGANVGSAQGPTGLGKYLMRSPTGEVIFGGETMRFWDLRAPWLEPLRGPNGLDLSRLKKDIQPWQERRSAEYMTHAPLGSLNSVGGVATEINAVNYVSPRSWLATSHFVLGFFLFVGHLWHAGRARAAAAGFEKGIDRDFEPVLSMTPLN.

Positions Met-1–Glu-14 are excised as a propeptide. An N-acetylthreonine modification is found at Thr-15. Phosphothreonine is present on Thr-15. 5 consecutive transmembrane segments (helical) span residues Leu-69 to Ala-93, Leu-134 to Asn-155, Lys-178 to Thr-200, Lys-255 to Ser-275, and Trp-291 to Ala-312. Glu-367 is a [CaMn4O5] cluster binding site. The helical transmembrane segment at Arg-447 to Pro-471 threads the bilayer.

Belongs to the PsbB/PsbC family. PsbC subfamily. PSII is composed of 1 copy each of membrane proteins PsbA, PsbB, PsbC, PsbD, PsbE, PsbF, PsbH, PsbI, PsbJ, PsbK, PsbL, PsbM, PsbT, PsbX, PsbY, PsbZ, Psb30/Ycf12, at least 3 peripheral proteins of the oxygen-evolving complex and a large number of cofactors. It forms dimeric complexes. Requires Binds multiple chlorophylls and provides some of the ligands for the Ca-4Mn-5O cluster of the oxygen-evolving complex. It may also provide a ligand for a Cl- that is required for oxygen evolution. PSII binds additional chlorophylls, carotenoids and specific lipids. as cofactor.

The protein localises to the plastid. Its subcellular location is the chloroplast thylakoid membrane. One of the components of the core complex of photosystem II (PSII). It binds chlorophyll and helps catalyze the primary light-induced photochemical processes of PSII. PSII is a light-driven water:plastoquinone oxidoreductase, using light energy to abstract electrons from H(2)O, generating O(2) and a proton gradient subsequently used for ATP formation. This Amborella trichopoda protein is Photosystem II CP43 reaction center protein.